The chain runs to 307 residues: Ribosomal protein L11 methyltransferase (307 aa).

Positions 162, 183, 205, and 244 each coordinate S-adenosyl-L-methionine.

Belongs to the methyltransferase superfamily. PrmA family.

It localises to the cytoplasm. It catalyses the reaction L-lysyl-[protein] + 3 S-adenosyl-L-methionine = N(6),N(6),N(6)-trimethyl-L-lysyl-[protein] + 3 S-adenosyl-L-homocysteine + 3 H(+). Its function is as follows. Methylates ribosomal protein L11. This Bordetella bronchiseptica (strain ATCC BAA-588 / NCTC 13252 / RB50) (Alcaligenes bronchisepticus) protein is Ribosomal protein L11 methyltransferase.